A 469-amino-acid chain; its full sequence is Cytosolic beta-glucosidase (469 aa).

Substrate contacts are provided by Gln-17, His-120, and Asn-164. Residue Glu-165 is the Proton donor of the active site. Tyr-309 contributes to the substrate binding site. The active-site Nucleophile is Glu-373. Substrate is bound by residues Trp-417 and 424–425; that span reads EW.

This sequence belongs to the glycosyl hydrolase 1 family. Klotho subfamily. Post-translationally, the N-terminus is blocked. Present in hepatocytes (at protein level).

It is found in the cytoplasm. The protein localises to the cytosol. It carries out the reaction Hydrolysis of terminal, non-reducing beta-D-glucosyl residues with release of beta-D-glucose.. The enzyme catalyses a beta-D-glucosyl-(1&lt;-&gt;1')-N-acylsphing-4-enine + H2O = an N-acylsphing-4-enine + D-glucose. It catalyses the reaction a beta-D-galactosyl-(1&lt;-&gt;1')-N-acylsphing-4-enine + H2O = an N-acylsphing-4-enine + D-galactose. The catalysed reaction is beta-D-glucosyl-(1&lt;-&gt;1)-sphing-4-enine + H2O = sphing-4-enine + D-glucose. It carries out the reaction beta-D-glucosyl-(1&lt;-&gt;1)-N-octadecanoylsphing-4-enine + H2O = N-octadecanoylsphing-4-enine + D-glucose. The enzyme catalyses beta-D-galactosyl-(1&lt;-&gt;1)-sphing-4-enine + H2O = sphing-4-enine + D-galactose. It catalyses the reaction beta-D-galactosyl-(1&lt;-&gt;1')-N-octadecanoylsphing-4-enine + H2O = N-octadecanoylsphing-4-enine + D-galactose. The catalysed reaction is a beta-D-xylosyl-(1&lt;-&gt;1')-N-acylsphing-4-enine + cholesterol = cholesteryl 3-beta-D-xyloside + an N-acylsphing-4-enine. Its activity is regulated as follows. Inhibited by 2,4-dinitrophenyl-2-fluoro-2-deoxy-beta-D-glucopyranoside. In terms of biological role, neutral cytosolic beta-glycosidase with a broad substrate specificity that could play a role in the catabolism of glycosylceramides. Has a significant glucosylceramidase activity in vitro. However, that activity is relatively low and its significance in vivo is not clear. Hydrolyzes galactosylceramide/GalCer, glucosylsphingosine/GlcSph and galactosylsphingosine/GalSph. However, the in vivo relevance of these activities is unclear. It can also hydrolyze a broad variety of dietary glycosides including phytoestrogens, flavonols, flavones, flavanones and cyanogens in vitro and could therefore play a role in the metabolism of xenobiotics. Possesses transxylosylase activity in vitro using xylosylated ceramides/XylCers (such as beta-D-xylosyl-(1&lt;-&gt;1')-N-acylsphing-4-enine) as xylosyl donors and cholesterol as acceptor. Could also play a role in the catabolism of cytosolic sialyl free N-glycans. This Cavia porcellus (Guinea pig) protein is Cytosolic beta-glucosidase.